The primary structure comprises 235 residues: Large ribosomal subunit protein uL1 (235 aa).

The protein belongs to the universal ribosomal protein uL1 family. As to quaternary structure, part of the 50S ribosomal subunit.

Its function is as follows. Binds directly to 23S rRNA. The L1 stalk is quite mobile in the ribosome, and is involved in E site tRNA release. In terms of biological role, protein L1 is also a translational repressor protein, it controls the translation of the L11 operon by binding to its mRNA. This chain is Large ribosomal subunit protein uL1, found in Mycobacterium leprae (strain Br4923).